The following is a 716-amino-acid chain: Polyribonucleotide nucleotidyltransferase (716 aa).

Mg(2+) contacts are provided by Asp-480 and Asp-486. A KH domain is found at 547-606; the sequence is PKIVQLQIDIDKISLVIGSTGKTVKAITDEFEVKVQIEQNGKIILFGDDDFKMQKAKERI. Residues 616–711 enclose the S1 motif domain; the sequence is GEIYEGTVKK…KFGKIDLEIV (96 aa).

Belongs to the polyribonucleotide nucleotidyltransferase family. Mg(2+) serves as cofactor.

The protein localises to the cytoplasm. The enzyme catalyses RNA(n+1) + phosphate = RNA(n) + a ribonucleoside 5'-diphosphate. Its function is as follows. Involved in mRNA degradation. Catalyzes the phosphorolysis of single-stranded polyribonucleotides processively in the 3'- to 5'-direction. The protein is Polyribonucleotide nucleotidyltransferase of Borreliella burgdorferi (strain ATCC 35210 / DSM 4680 / CIP 102532 / B31) (Borrelia burgdorferi).